Reading from the N-terminus, the 214-residue chain is Cytochrome b (214 aa).

4 consecutive transmembrane segments (helical) span residues 31–51 (FGSM…FLAI), 75–96 (WIMQ…YIHI), 111–131 (WLSG…GYVL), and 176–196 (FFAL…IHIL). H81 and H95 together coordinate heme b. H180 and H194 together coordinate heme b. H199 serves as a coordination point for a ubiquinone.

Belongs to the cytochrome b family. As to quaternary structure, the cytochrome bc1 complex contains 3 respiratory subunits (MT-CYB, CYC1 and UQCRFS1), 2 core proteins (UQCRC1 and UQCRC2) and probably 6 low-molecular weight proteins. Heme b serves as cofactor.

The protein resides in the mitochondrion inner membrane. Functionally, component of the ubiquinol-cytochrome c reductase complex (complex III or cytochrome b-c1 complex) that is part of the mitochondrial respiratory chain. The b-c1 complex mediates electron transfer from ubiquinol to cytochrome c. Contributes to the generation of a proton gradient across the mitochondrial membrane that is then used for ATP synthesis. The chain is Cytochrome b (MT-CYB) from Trimeresurus stejnegeri (Chinese green tree viper).